Reading from the N-terminus, the 215-residue chain is 3-dehydroquinate dehydratase (215 aa).

Residues 27-29 (EVR) and arginine 54 contribute to the 3-dehydroquinate site. Catalysis depends on histidine 112, which acts as the Proton donor/acceptor. Lysine 139 acts as the Schiff-base intermediate with substrate in catalysis. 3-dehydroquinate contacts are provided by arginine 176 and glutamine 198.

Belongs to the type-I 3-dehydroquinase family. As to quaternary structure, homodimer.

The catalysed reaction is 3-dehydroquinate = 3-dehydroshikimate + H2O. It participates in metabolic intermediate biosynthesis; chorismate biosynthesis; chorismate from D-erythrose 4-phosphate and phosphoenolpyruvate: step 3/7. Functionally, involved in the third step of the chorismate pathway, which leads to the biosynthesis of aromatic amino acids. Catalyzes the cis-dehydration of 3-dehydroquinate (DHQ) and introduces the first double bond of the aromatic ring to yield 3-dehydroshikimate. The sequence is that of 3-dehydroquinate dehydratase from Thermococcus onnurineus (strain NA1).